Here is a 71-residue protein sequence, read N- to C-terminus: DNA-directed RNA polymerase subunit epsilon (71 aa).

The protein belongs to the RNA polymerase subunit epsilon family. As to quaternary structure, RNAP is composed of a core of 2 alpha, a beta and a beta' subunit. The core is associated with a delta subunit, and at least one of epsilon or omega. When a sigma factor is associated with the core the holoenzyme is formed, which can initiate transcription.

It carries out the reaction RNA(n) + a ribonucleoside 5'-triphosphate = RNA(n+1) + diphosphate. Functionally, a non-essential component of RNA polymerase (RNAP). This is DNA-directed RNA polymerase subunit epsilon from Anoxybacillus flavithermus (strain DSM 21510 / WK1).